The chain runs to 514 residues: ATP synthase subunit alpha (514 aa).

ATP is bound at residue 170–177 (GDRQTGKT).

This sequence belongs to the ATPase alpha/beta chains family. In terms of assembly, F-type ATPases have 2 components, CF(1) - the catalytic core - and CF(0) - the membrane proton channel. CF(1) has five subunits: alpha(3), beta(3), gamma(1), delta(1), epsilon(1). CF(0) has three main subunits: a(1), b(2) and c(9-12). The alpha and beta chains form an alternating ring which encloses part of the gamma chain. CF(1) is attached to CF(0) by a central stalk formed by the gamma and epsilon chains, while a peripheral stalk is formed by the delta and b chains.

It is found in the cell inner membrane. The enzyme catalyses ATP + H2O + 4 H(+)(in) = ADP + phosphate + 5 H(+)(out). In terms of biological role, produces ATP from ADP in the presence of a proton gradient across the membrane. The alpha chain is a regulatory subunit. The protein is ATP synthase subunit alpha of Acidithiobacillus ferridurans.